We begin with the raw amino-acid sequence, 87 residues long: DNA-directed RNA polymerase subunit omega (87 aa).

It belongs to the RNA polymerase subunit omega family. In terms of assembly, the RNAP catalytic core consists of 2 alpha, 1 beta, 1 beta' and 1 omega subunit. When a sigma factor is associated with the core the holoenzyme is formed, which can initiate transcription.

The enzyme catalyses RNA(n) + a ribonucleoside 5'-triphosphate = RNA(n+1) + diphosphate. Its function is as follows. Promotes RNA polymerase assembly. Latches the N- and C-terminal regions of the beta' subunit thereby facilitating its interaction with the beta and alpha subunits. The protein is DNA-directed RNA polymerase subunit omega of Pseudomonas fluorescens (strain Pf0-1).